The following is a 609-amino-acid chain: Threonine--tRNA ligase (609 aa).

The segment at 1–145 is editing domain; it reads MRLLLIHSDY…TIVPGAGAAV (145 aa). Positions 194-485 are catalytic; sequence IHVDLMRSKE…TANQSVPQLP (292 aa). Cysteine 286, histidine 338, and histidine 458 together coordinate Zn(2+).

The protein belongs to the class-II aminoacyl-tRNA synthetase family. In terms of assembly, homodimer. Zn(2+) serves as cofactor.

It localises to the cytoplasm. The catalysed reaction is tRNA(Thr) + L-threonine + ATP = L-threonyl-tRNA(Thr) + AMP + diphosphate + H(+). Catalyzes the attachment of threonine to tRNA(Thr) in a two-step reaction: L-threonine is first activated by ATP to form Thr-AMP and then transferred to the acceptor end of tRNA(Thr). Also edits incorrectly charged L-seryl-tRNA(Thr). The sequence is that of Threonine--tRNA ligase from Methanosphaerula palustris (strain ATCC BAA-1556 / DSM 19958 / E1-9c).